The chain runs to 159 residues: Ribosomal RNA large subunit methyltransferase H (159 aa).

S-adenosyl-L-methionine is bound by residues glycine 108 and 127 to 132; that span reads FGKLTM.

This sequence belongs to the RNA methyltransferase RlmH family. Homodimer.

It is found in the cytoplasm. The enzyme catalyses pseudouridine(1915) in 23S rRNA + S-adenosyl-L-methionine = N(3)-methylpseudouridine(1915) in 23S rRNA + S-adenosyl-L-homocysteine + H(+). In terms of biological role, specifically methylates the pseudouridine at position 1915 (m3Psi1915) in 23S rRNA. This is Ribosomal RNA large subunit methyltransferase H from Lactobacillus acidophilus (strain ATCC 700396 / NCK56 / N2 / NCFM).